Consider the following 272-residue polypeptide: 3-methyl-2-oxobutanoate hydroxymethyltransferase (272 aa).

Mg(2+) contacts are provided by aspartate 53 and aspartate 92. 3-methyl-2-oxobutanoate is bound by residues 53 to 54 (DS), aspartate 92, and lysine 120. Glutamate 122 contacts Mg(2+). The Proton acceptor role is filled by glutamate 189.

It belongs to the PanB family. Homodecamer; pentamer of dimers. Mg(2+) serves as cofactor.

It is found in the cytoplasm. The enzyme catalyses 3-methyl-2-oxobutanoate + (6R)-5,10-methylene-5,6,7,8-tetrahydrofolate + H2O = 2-dehydropantoate + (6S)-5,6,7,8-tetrahydrofolate. It participates in cofactor biosynthesis; (R)-pantothenate biosynthesis; (R)-pantoate from 3-methyl-2-oxobutanoate: step 1/2. Its function is as follows. Catalyzes the reversible reaction in which hydroxymethyl group from 5,10-methylenetetrahydrofolate is transferred onto alpha-ketoisovalerate to form ketopantoate. This chain is 3-methyl-2-oxobutanoate hydroxymethyltransferase, found in Ralstonia pickettii (strain 12J).